A 214-amino-acid chain; its full sequence is A-type ATP synthase subunit D (214 aa).

Belongs to the V-ATPase D subunit family. As to quaternary structure, has multiple subunits with at least A(3), B(3), C, D, E, F, H, I and proteolipid K(x).

It is found in the cell membrane. Functionally, component of the A-type ATP synthase that produces ATP from ADP in the presence of a proton gradient across the membrane. The chain is A-type ATP synthase subunit D from Pyrococcus abyssi (strain GE5 / Orsay).